Reading from the N-terminus, the 204-residue chain is Thymidylate kinase (204 aa).

10–17 contacts ATP; that stretch reads GGDGAGKT.

Belongs to the thymidylate kinase family.

It catalyses the reaction dTMP + ATP = dTDP + ADP. In terms of biological role, phosphorylation of dTMP to form dTDP in both de novo and salvage pathways of dTTP synthesis. The polypeptide is Thymidylate kinase (Cutibacterium acnes (strain DSM 16379 / KPA171202) (Propionibacterium acnes)).